Consider the following 181-residue polypeptide: Isopentenyl-diphosphate Delta-isomerase (181 aa).

Mn(2+) is bound by residues H24 and H30. In terms of domain architecture, Nudix hydrolase spans 28–168 (LLHLAFSVLL…PDTFSVWFPT (141 aa)). C68 is a catalytic residue. C68 serves as a coordination point for Mg(2+). H70 is a Mn(2+) binding site. E88 is a Mg(2+) binding site. Positions 117 and 119 each coordinate Mn(2+). Residue E119 is part of the active site.

It belongs to the IPP isomerase type 1 family. Requires Mg(2+) as cofactor. The cofactor is Mn(2+).

It localises to the cytoplasm. It carries out the reaction isopentenyl diphosphate = dimethylallyl diphosphate. It functions in the pathway isoprenoid biosynthesis; dimethylallyl diphosphate biosynthesis; dimethylallyl diphosphate from isopentenyl diphosphate: step 1/1. Functionally, catalyzes the 1,3-allylic rearrangement of the homoallylic substrate isopentenyl (IPP) to its highly electrophilic allylic isomer, dimethylallyl diphosphate (DMAPP). The protein is Isopentenyl-diphosphate Delta-isomerase of Aliivibrio fischeri (strain ATCC 700601 / ES114) (Vibrio fischeri).